Consider the following 368-residue polypeptide: C6 finger domain transcription factor tcpZ (368 aa).

The segment at residues Cys30 to Cys56 is a DNA-binding region (zn(2)-C6 fungal-type). The interval Phe84–Ala109 is disordered.

Its subcellular location is the nucleus. Functionally, transcription factor that specifically regulates the thioclapurine biosynthesis gene cluster. In Claviceps purpurea (strain 20.1) (Ergot fungus), this protein is C6 finger domain transcription factor tcpZ.